The following is a 209-amino-acid chain: Uracil phosphoribosyltransferase (209 aa).

5-phospho-alpha-D-ribose 1-diphosphate is bound by residues Arg-79, Arg-104, and 131 to 139 (DPMLATGNS). Residues Ile-194 and 199–201 (GDA) each bind uracil. Asp-200 provides a ligand contact to 5-phospho-alpha-D-ribose 1-diphosphate.

This sequence belongs to the UPRTase family. Mg(2+) serves as cofactor.

It carries out the reaction UMP + diphosphate = 5-phospho-alpha-D-ribose 1-diphosphate + uracil. It functions in the pathway pyrimidine metabolism; UMP biosynthesis via salvage pathway; UMP from uracil: step 1/1. Its activity is regulated as follows. Allosterically activated by GTP. Its function is as follows. Catalyzes the conversion of uracil and 5-phospho-alpha-D-ribose 1-diphosphate (PRPP) to UMP and diphosphate. This is Uracil phosphoribosyltransferase from Acidovorax ebreus (strain TPSY) (Diaphorobacter sp. (strain TPSY)).